Reading from the N-terminus, the 178-residue chain is Ribosome maturation factor RimM (178 aa).

The region spanning 99–178 is the PRC barrel domain; it reads EGDYYWHDLI…TIEVDWDAGF (80 aa).

The protein belongs to the RimM family. As to quaternary structure, binds ribosomal protein uS19.

It localises to the cytoplasm. Functionally, an accessory protein needed during the final step in the assembly of 30S ribosomal subunit, possibly for assembly of the head region. Essential for efficient processing of 16S rRNA. May be needed both before and after RbfA during the maturation of 16S rRNA. It has affinity for free ribosomal 30S subunits but not for 70S ribosomes. The sequence is that of Ribosome maturation factor RimM from Haemophilus influenzae (strain ATCC 51907 / DSM 11121 / KW20 / Rd).